The primary structure comprises 460 residues: N-myc proto-oncogene protein (460 aa).

Positions 19-47 (LEFDSLQPCFYPDEDDFYFGGPDSTPPGE) are interaction with AURKA. Positions 61-90 (LSPSRAFSEQSPEPSDWATEMLLPEADLWG) are interaction with AURKA and FBXW7. Positions 76–85 (DWATEMLLPE) match the 9aaTAD motif. 3 disordered regions span residues 131 to 169 (VSEK…GAGR), 221 to 288 (AAAP…SNSK), and 330 to 388 (APSP…LERQ). Residues 138–158 (GRGPPAAGPATPGAGAANPAG) show a composition bias toward low complexity. Over residues 159 to 169 (RGHGGTAGAGR) the composition is skewed to gly residues. The span at 221 to 233 (AAAPASAAVAAPP) shows a compositional bias: low complexity. Positions 255–274 (TLSDSDDEDDEEEDEEEEID) are enriched in acidic residues. Residues Ser-257 and Ser-259 each carry the phosphoserine; by CK2 modification. Residues 377–429 (ERRRNHNILERQRRNDLRSSFLTLRDHVPELVKNEKAAKVVILKKATEYVHSL) form the bHLH domain. Residues 429–450 (LQAEEHQLLLEKEKLQARQQQL) are leucine-zipper.

Efficient DNA binding requires dimerization with another bHLH protein. Binds DNA as a heterodimer with MAX. Interacts with KDM5A, KDM5B and HUWE1. Interacts with MYCNOS. Interacts with AURKA; interaction is phospho-independent and triggers AURKA activation; AURKA competes with FBXW7 for binding to unphosphorylated MYCN but not for binding to unphosphorylated MYCN. Interacts with FBXW7; FBXW7 competes with AURKA for binding to unphosphorylated MYCN but not for binding to phosphorylated MYCN. In terms of processing, phosphorylated by GSK3-beta which may promote its degradation. Phosphorylated by AURKA.

Its subcellular location is the nucleus. In terms of biological role, positively regulates the transcription of MYCNOS in neuroblastoma cells. The protein is N-myc proto-oncogene protein (MYCN) of Marmota monax (Woodchuck).